The sequence spans 436 residues: MFDSTLNPLWQRYILAVQEEVKPALGCTEPISLALAAAVAAAELEGPVERVEAWVSPNLMKNGLGVTVPGTGMVGLPIAAALGALGGNANAGLEVLKDATAQAIADAKALLAAGKVSVKIQEPCNEILFSRAKVWNGEKWACVTIVGGHTNIVHIETHNSVVFTQQACVAEGEQESPLTVLSRTTLAEILKFVNEVPFAAIRFILDSAKLNCALSQEGLSGKWGLHIGATLEKQCERGLLAKDLSSSIVIRTSAASDARMGGATLPAMSNSGSGNQGITATMPVVVVAEHFGADDERLARALMLSHLSAIYIHNQLPRLSALCAATTAAMGAAAGMAWLVDGRYETISMAISSMIGDVSGMICDGASNSCAMKVSTSASAAWKAVLMALDDTAVTGNEGIVAHDVEQSIANLCALASHSMQQTDRQIIEIMASKAR.

The protein belongs to the UPF0597 family.

This chain is UPF0597 protein YhaM, found in Shigella boydii serotype 4 (strain Sb227).